Consider the following 87-residue polypeptide: Potassium channel toxin Ttr-beta-KTx (87 aa).

A signal peptide spans 1 to 19; it reads MERKWALLLFLGMVTLVSC. The propeptide occupies 20–27; sequence GLREKHVQ. In terms of domain architecture, BetaSPN-type CS-alpha/beta spans 53 to 87; that stretch reads QFGCPAYEGYCNNHCQDIKRKDGECHGFKCKCAKD. Cystine bridges form between Cys-56/Cys-77, Cys-63/Cys-82, and Cys-67/Cys-84.

This sequence belongs to the long chain scorpion toxin family. Class 1 subfamily. As to expression, expressed by the venom gland.

It is found in the secreted. In terms of biological role, inhibits voltage-gated potassium channel. The chain is Potassium channel toxin Ttr-beta-KTx from Tityus trivittatus (Argentinean scorpion).